The primary structure comprises 947 residues: Nonribosomal peptide synthetase ucdA (947 aa).

The adenylation (A) domain stretch occupies residues 25-413; that stretch reads YSPHANAGYC…AGPVVFKEYF (389 aa). Residues 585-665 form the Carrier domain; it reads APENEFERDL…DLGTALRKLQ (81 aa). Position 623 is an O-(pantetheine 4'-phosphoryl)serine (serine 623). The tract at residues 684 to 934 is thioesterase (TE) domain; it reads PLWLVHPGVG…MLSPEHVFDF (251 aa).

This sequence belongs to the NRP synthetase family.

It carries out the reaction 2 3-(4-hydroxyphenyl)pyruvate + 2 ATP = atromentin + 2 AMP + 2 diphosphate + H(+). The protein operates within secondary metabolite biosynthesis. Nonribosomal peptide synthetase that mediates the biosynthesis of usterphenyllins and uscandidusins, p-terphenyl derivatives. Within the pathway, ucdA condenses two 4-hydroxyphenylpyruvate (HPPA) units to produce atromentin. UcdA first activates HPPA through its A domain to AMP-HPPA. The HPPA unit is then loaded to the T domain and eventually transferred to the TE domain. Another HPPA unit is then loaded onto the T domain. The TE domain then catalyzes the condensation of the two HPPA units and the release of atromentin via cyclization. The pathway begin with the biosynthesis of 4-hydroxyphenylpyruvate (HPPA) from L-tyrosine, possibly by the aminotransferase ucdG. The nonribosomal peptide synthetase ucdA then condenses two HPPA units to produce atromentin. The key step in this pathway is the reduction and dehydration of atromentin to form a terphenyl triol intermediate, performed by the NAD-dependent dehydrogenase ucdB. Further O-methylation by the methyltransferase ucdC forms terphenyllin carrying two methoxy moieties at C-9 and C-12, and subsequent dihydroxylation at C-3 of ring A and C-15 of ring C by the flavin-dependent oxygenase ucdD leads to 3,15-dihydroxyterphenyllin. Prenylation by ucdE at position C-5 of ring A forms usterphenyllin B, and is followed by a second prenylation at position C-14 of ring C to form usterphenyllin A. The following furan ring formation that leads to uscandidusins A and B was proven to be an unexpected spontaneous non-enzymatic reaction. The chain is Nonribosomal peptide synthetase ucdA from Aspergillus ustus.